A 268-amino-acid polypeptide reads, in one-letter code: Peptide transport system ATP-binding protein SapF (268 aa).

Residues 6–251 form the ABC transporter domain; sequence LEVRNLSKTF…PLHELTKRLI (246 aa). 47-54 contacts ATP; sequence GENGSGKS.

The protein belongs to the ABC transporter superfamily.

The protein localises to the cell inner membrane. Involved in a peptide intake transport system that plays a role in the resistance to antimicrobial peptides. The chain is Peptide transport system ATP-binding protein SapF (sapF) from Escherichia coli O6:H1 (strain CFT073 / ATCC 700928 / UPEC).